The following is a 435-amino-acid chain: Dual specificity mitogen-activated protein kinase kinase jkk-1 (435 aa).

Basic and acidic residues predominate over residues 35-49 (RDRRSTSVDQKHKEC). The disordered stretch occupies residues 35–90 (RDRRSTSVDQKHKECSSTSSSPQHQRPNNIGYLTSPMERKFTPLSMKPSPSRRDTE). Polar residues predominate over residues 50–66 (SSTSSSPQHQRPNNIGY). The Protein kinase domain occupies 122–385 (IHIISLLGSG…YRQLMKHDFY (264 aa)). ATP-binding positions include 128–136 (LGSGSCGVV) and Lys149. Asp246 serves as the catalytic Proton acceptor.

Belongs to the protein kinase superfamily. STE Ser/Thr protein kinase family. MAP kinase kinase subfamily. As to quaternary structure, interacts with unc-16. Mg(2+) serves as cofactor. As to expression, expressed in most neurons, including nerve ring, head ganglions, dorsal and ventral nerve cords and tail ganglions.

Its subcellular location is the cytoplasm. It localises to the perikaryon. It is found in the cell projection. The protein localises to the axon. It carries out the reaction L-seryl-[protein] + ATP = O-phospho-L-seryl-[protein] + ADP + H(+). The catalysed reaction is L-threonyl-[protein] + ATP = O-phospho-L-threonyl-[protein] + ADP + H(+). It catalyses the reaction L-tyrosyl-[protein] + ATP = O-phospho-L-tyrosyl-[protein] + ADP + H(+). Functionally, dual specificity protein kinase which acts as an essential component of the JNK signal transduction pathway. May phosphorylate jnk-1. Plays a role in coordinating locomotion via D-type GABAergic motoneurons and in regulating synaptic vesicle transport downstream of adapter protein unc-16 and probably by activating jnk-1. Positively regulates lifespan. Upon environmental stress such as heat stress regulates daf-16 nuclear translocation probably by activating jnk-1. Regulates germline cell apoptosis in response to heavy metals such as Cu(2+) and to arsenite. In Caenorhabditis elegans, this protein is Dual specificity mitogen-activated protein kinase kinase jkk-1.